Here is a 602-residue protein sequence, read N- to C-terminus: NAD-dependent protein deacetylase sir-2.1 (602 aa).

Positions 25–57 are disordered; it reads PEIETMHIENSVEGESGRQRTESTASVNSESWQ. Residues 46-57 are compositionally biased toward polar residues; that stretch reads ESTASVNSESWQ. A Deacetylase sirtuin-type domain is found at 119 to 374; that stretch reads KLFTYNSLSD…RDICYALGGS (256 aa). Residues 144 to 163 and 228 to 231 contribute to the NAD(+) site; these read GAGVSVSCGIPDFRSKDGIY and QNID. The active-site Proton acceptor is the H246. 4 residues coordinate Zn(2+): C254, C257, C278, and C281. Residues 318 to 320, 343 to 345, and C360 contribute to the NAD(+) site; these read GSS and NRE. 2 disordered regions span residues 411–468 and 520–551; these read QERR…SDEV and RNRHESDSSCESCSTVPGSDKSEANPLSRSQS.

This sequence belongs to the sirtuin family. Class I subfamily. In terms of assembly, interacts with ftt-2 and par-5. Interacts with daf-16 following heat-shock, which causes daf-16 to accumulate in the nucleus. Interaction with daf-16 is promoted by ftt-2. The cofactor is Zn(2+).

The protein resides in the nucleus. The enzyme catalyses N(6)-acetyl-L-lysyl-[protein] + NAD(+) + H2O = 2''-O-acetyl-ADP-D-ribose + nicotinamide + L-lysyl-[protein]. In terms of biological role, NAD-dependent deacetylase. Required for a reduction of the 'Lys-16' acetylation of histone H4 (H4K16ac) on dosage-compensated X chromosomes in hermaphrodites. Functions upstream of daf-16 in the insulin-like signaling pathway, promoting daf-16 mediated transcriptional activation and increased life-span. May also regulate life-span independently of daf-16 by modulating the transcription of genes involved in the stress response of the endoplasmic reticulum (ER). Acts upstream of the nicotinic acid metabolism pathway, which may be linked to the regulation of longevity. Plays a role in ascaroside-mediated longevity and stress resistance. This chain is NAD-dependent protein deacetylase sir-2.1 (sir-2.1), found in Caenorhabditis briggsae.